A 262-amino-acid chain; its full sequence is tRNA (guanine-N(7)-)-methyltransferase (262 aa).

Residues 1-58 (MLPQDTNTDPLPGDDAESASGKSADASQGTPNPGDEVAHPRRIRSFVRRAGRTSTGQQ) form a disordered region. A compositionally biased stretch (basic residues) spans 40–51 (PRRIRSFVRRAG). Residues E92, E117, D144, and D167 each coordinate S-adenosyl-L-methionine. D167 is a catalytic residue. Position 171 (K171) interacts with substrate. The tract at residues 173–178 (RHNKRR) is interaction with RNA. Residues D203 and 241–244 (TKFE) contribute to the substrate site.

It belongs to the class I-like SAM-binding methyltransferase superfamily. TrmB family.

The catalysed reaction is guanosine(46) in tRNA + S-adenosyl-L-methionine = N(7)-methylguanosine(46) in tRNA + S-adenosyl-L-homocysteine. It functions in the pathway tRNA modification; N(7)-methylguanine-tRNA biosynthesis. In terms of biological role, catalyzes the formation of N(7)-methylguanine at position 46 (m7G46) in tRNA. The chain is tRNA (guanine-N(7)-)-methyltransferase from Cupriavidus metallidurans (strain ATCC 43123 / DSM 2839 / NBRC 102507 / CH34) (Ralstonia metallidurans).